A 151-amino-acid chain; its full sequence is Testis-expressed protein 29 (151 aa).

At 1 to 56 the chain is on the extracellular side; it reads MEYVLEVKNSPRHLLKQFTVCDVPLYDICDYNVSRDRCQELGCCFYEGVCYKKAVP. A helical membrane pass occupies residues 57–77; that stretch reads IYIHVFSALIVIIAGAFVITI. At 78 to 151 the chain is on the cytoplasmic side; that stretch reads IYRVIQESRK…TITEAEETED (74 aa). Residues 100-151 are disordered; that stretch reads KSSEKAELASSSSKLGLKPASPGPPSAGPSMKSDEDKDDVTGTITEAEETED. Positions 107–119 are enriched in low complexity; the sequence is LASSSSKLGLKPA.

It localises to the membrane. This is Testis-expressed protein 29 (TEX29) from Homo sapiens (Human).